We begin with the raw amino-acid sequence, 302 residues long: MNLFSPKEVSQLLKRYEIHPKKSLGQNFLVDGNIIQKIIAAAELKEQDIVLEIGPGLGTLTRDMSFYVNEIFAIELDQRMIDILQETVGSCDNVNIIHNDALKLDYQELISDFIEFSPAQLQCKSKQINPKNLKAVSNLPYYIASPLVLKLAKEKVPLSVMVLMVQREVADRFTASPGSKNYGAVTVLLDCFYEVEGVFNVPKTVFYPQPRVESQVVKLTKRSEAKINDDYQEDFIKFVNQAFNSRRKTLVNNILSIFTGEKSELSQILENNGFSAGIRGEQLTVDEFAQIFKIIYNRIKYS.

N27, L29, G54, E75, D100, and N138 together coordinate S-adenosyl-L-methionine.

This sequence belongs to the class I-like SAM-binding methyltransferase superfamily. rRNA adenine N(6)-methyltransferase family. RsmA subfamily.

It localises to the cytoplasm. It carries out the reaction adenosine(1518)/adenosine(1519) in 16S rRNA + 4 S-adenosyl-L-methionine = N(6)-dimethyladenosine(1518)/N(6)-dimethyladenosine(1519) in 16S rRNA + 4 S-adenosyl-L-homocysteine + 4 H(+). Specifically dimethylates two adjacent adenosines (A1518 and A1519) in the loop of a conserved hairpin near the 3'-end of 16S rRNA in the 30S particle. May play a critical role in biogenesis of 30S subunits. This Natranaerobius thermophilus (strain ATCC BAA-1301 / DSM 18059 / JW/NM-WN-LF) protein is Ribosomal RNA small subunit methyltransferase A.